An 877-amino-acid chain; its full sequence is Valine--tRNA ligase (877 aa).

The 'HIGH' region motif lies at 46-56; the sequence is PYPTGSIHMGH. Positions 529-533 match the 'KMSKS' region motif; that stretch reads KMSKS. K532 is an ATP binding site.

Belongs to the class-I aminoacyl-tRNA synthetase family. ValS type 2 subfamily.

Its subcellular location is the cytoplasm. It carries out the reaction tRNA(Val) + L-valine + ATP = L-valyl-tRNA(Val) + AMP + diphosphate. Its function is as follows. Catalyzes the attachment of valine to tRNA(Val). As ValRS can inadvertently accommodate and process structurally similar amino acids such as threonine, to avoid such errors, it has a 'posttransfer' editing activity that hydrolyzes mischarged Thr-tRNA(Val) in a tRNA-dependent manner. The protein is Valine--tRNA ligase of Methanothermobacter thermautotrophicus (strain ATCC 29096 / DSM 1053 / JCM 10044 / NBRC 100330 / Delta H) (Methanobacterium thermoautotrophicum).